The sequence spans 205 residues: Cryptic plasmid protein C (205 aa).

The disordered stretch occupies residues 142-205; it reads THGYSDPDDP…RAGNAGKGRF (64 aa). Residues 155 to 174 show a composition bias toward polar residues; that stretch reads QSMTQAKDLPRNTQEAAQSI. Residues 189–205 are compositionally biased toward basic residues; sequence QAKKPRRRAGNAGKGRF.

The sequence is that of Cryptic plasmid protein C (cppC) from Neisseria gonorrhoeae.